Here is a 762-residue protein sequence, read N- to C-terminus: 5-methyltetrahydropteroyltriglutamate--homocysteine methyltransferase (762 aa).

Residues 18-21 (REWK) and lysine 112 contribute to the 5-methyltetrahydropteroyltri-L-glutamate site. L-homocysteine-binding positions include 435 to 437 (IGS) and glutamate 488. L-methionine-binding positions include 435–437 (IGS) and glutamate 488. 5-methyltetrahydropteroyltri-L-glutamate-binding positions include 519-520 (RC) and tryptophan 565. Aspartate 603 contributes to the L-homocysteine binding site. Aspartate 603 contacts L-methionine. Glutamate 609 provides a ligand contact to 5-methyltetrahydropteroyltri-L-glutamate. Residues histidine 645, cysteine 647, and glutamate 669 each contribute to the Zn(2+) site. The active-site Proton donor is histidine 698. A Zn(2+)-binding site is contributed by cysteine 730.

It belongs to the vitamin-B12 independent methionine synthase family. Zn(2+) is required as a cofactor.

The enzyme catalyses 5-methyltetrahydropteroyltri-L-glutamate + L-homocysteine = tetrahydropteroyltri-L-glutamate + L-methionine. The protein operates within amino-acid biosynthesis; L-methionine biosynthesis via de novo pathway; L-methionine from L-homocysteine (MetE route): step 1/1. Its function is as follows. Catalyzes the transfer of a methyl group from 5-methyltetrahydrofolate to homocysteine resulting in methionine formation. This chain is 5-methyltetrahydropteroyltriglutamate--homocysteine methyltransferase, found in Bacillus velezensis (strain DSM 23117 / BGSC 10A6 / LMG 26770 / FZB42) (Bacillus amyloliquefaciens subsp. plantarum).